Consider the following 363-residue polypeptide: tRNA/tmRNA (uracil-C(5))-methyltransferase (363 aa).

S-adenosyl-L-methionine-binding residues include Gln-187, Tyr-215, Asn-220, Glu-236, and Asp-296. Residue Cys-321 is the Nucleophile of the active site. The active-site Proton acceptor is Glu-355.

Belongs to the class I-like SAM-binding methyltransferase superfamily. RNA M5U methyltransferase family. TrmA subfamily.

It carries out the reaction uridine(54) in tRNA + S-adenosyl-L-methionine = 5-methyluridine(54) in tRNA + S-adenosyl-L-homocysteine + H(+). The enzyme catalyses uridine(341) in tmRNA + S-adenosyl-L-methionine = 5-methyluridine(341) in tmRNA + S-adenosyl-L-homocysteine + H(+). Dual-specificity methyltransferase that catalyzes the formation of 5-methyluridine at position 54 (m5U54) in all tRNAs, and that of position 341 (m5U341) in tmRNA (transfer-mRNA). The protein is tRNA/tmRNA (uracil-C(5))-methyltransferase of Pseudomonas aeruginosa (strain UCBPP-PA14).